The chain runs to 678 residues: SPS-sensor component PTR3 (678 aa).

2 disordered regions span residues 111-158 and 179-211; these read TGQG…SDPT and ANTE…SSLL. A compositionally biased stretch (low complexity) spans 127-144; that stretch reads TSPSSSSLSLTPSRSSST. Residues 149 to 158 show a composition bias toward basic and acidic residues; sequence ADNKTLSDPT. Positions 179 to 194 are enriched in polar residues; sequence ANTEVGSDHPLTTGTT.

As to quaternary structure, homodimer. Component of the plasma membrane SPS (SSY1-PTR3-SSY5) amino acid sensor complex. Interacts directly with SSY1 and SSY5. Post-translationally, hyperphosphorylated in response to extracellular amino acids and dependent on the amino acid sensor component SSY1. Phosphorylation is positively regulated by casein kinases YCK1 and YCK2, and negatively regulated by phosphatase PP2A regulatory subunit RTS1.

It is found in the cell membrane. Its function is as follows. Component of the SPS-sensor system, which regulates the expression of several amino acid-metabolizing enzymes and amino acid- and peptide-permeases in response to extracellular amino acid levels by controlling the activity of two transcription factors, STP1 and STP2. In Saccharomyces cerevisiae (strain ATCC 204508 / S288c) (Baker's yeast), this protein is SPS-sensor component PTR3 (PTR3).